Reading from the N-terminus, the 283-residue chain is Orotidine 5'-phosphate decarboxylase (283 aa).

The active-site Proton donor is the lysine 97.

Belongs to the OMP decarboxylase family. Type 2 subfamily.

The catalysed reaction is orotidine 5'-phosphate + H(+) = UMP + CO2. It participates in pyrimidine metabolism; UMP biosynthesis via de novo pathway; UMP from orotate: step 2/2. The sequence is that of Orotidine 5'-phosphate decarboxylase from Clostridium botulinum (strain Okra / Type B1).